Reading from the N-terminus, the 387-residue chain is Lipid-A-disaccharide synthase (387 aa).

Belongs to the LpxB family.

The catalysed reaction is a lipid X + a UDP-2-N,3-O-bis[(3R)-3-hydroxyacyl]-alpha-D-glucosamine = a lipid A disaccharide + UDP + H(+). It participates in bacterial outer membrane biogenesis; LPS lipid A biosynthesis. Its function is as follows. Condensation of UDP-2,3-diacylglucosamine and 2,3-diacylglucosamine-1-phosphate to form lipid A disaccharide, a precursor of lipid A, a phosphorylated glycolipid that anchors the lipopolysaccharide to the outer membrane of the cell. The chain is Lipid-A-disaccharide synthase from Glaesserella parasuis serovar 5 (strain SH0165) (Haemophilus parasuis).